A 279-amino-acid polypeptide reads, in one-letter code: Phosphatidylglycerol--prolipoprotein diacylglyceryl transferase (279 aa).

A run of 7 helical transmembrane segments spans residues 25-45, 60-80, 103-123, 133-153, 181-201, 209-229, and 236-256; these read WYGLMYVLALLVALYMAKFFV, YFIWVEIGVILGARFGYILIY, FVGISGMSYHGAVIGFIIATI, LWSLLDLCALSIPLGYFFGRI, PSQLYEACLEGITIFLILYFY, GELICVYVILYAIFRFLTEFL, and IGYFSFGLSLGQILSVFMLIL. Arg152 is an a 1,2-diacyl-sn-glycero-3-phospho-(1'-sn-glycerol) binding site.

Belongs to the Lgt family.

It is found in the cell inner membrane. The catalysed reaction is L-cysteinyl-[prolipoprotein] + a 1,2-diacyl-sn-glycero-3-phospho-(1'-sn-glycerol) = an S-1,2-diacyl-sn-glyceryl-L-cysteinyl-[prolipoprotein] + sn-glycerol 1-phosphate + H(+). The protein operates within protein modification; lipoprotein biosynthesis (diacylglyceryl transfer). Its function is as follows. Catalyzes the transfer of the diacylglyceryl group from phosphatidylglycerol to the sulfhydryl group of the N-terminal cysteine of a prolipoprotein, the first step in the formation of mature lipoproteins. This Campylobacter hominis (strain ATCC BAA-381 / DSM 21671 / CCUG 45161 / LMG 19568 / NCTC 13146 / CH001A) protein is Phosphatidylglycerol--prolipoprotein diacylglyceryl transferase.